The following is a 295-amino-acid chain: Gamma-glutamyl-L-1-hydroxyisopropylamide hydrolase (295 aa).

The region spanning 5 to 221 is the Glutamine amidotransferase type-1 domain; the sequence is RILICDGNTE…LRESARSLVE (217 aa). The Nucleophile role is filled by C104. Active-site residues include H200 and E202.

The enzyme catalyses gamma-L-glutamyl-L-alaninol + H2O = L-alaninol + L-glutamate. Involved in the degradation of isopropylamine, which is a constituent of the herbicides atrazine. Catalyzes the hydrolysis of gamma-glutamyl-L-alaninol (GALO) to L-alaninol and L-glutamate. It can also uses gamma-glutamyl-isopropylamide, gamma-glutamyl-ethylamide, L-glutamine, and gamma-glutamyl-p-nitroanilide. This Pseudomonas sp protein is Gamma-glutamyl-L-1-hydroxyisopropylamide hydrolase (ipuF).